A 2352-amino-acid polypeptide reads, in one-letter code: Cell wall alpha-1,3-glucan synthase mok12 (2352 aa).

Positions Ser-1786–Tyr-1813 are disordered. The segment covering Asp-1798–Tyr-1813 has biased composition (polar residues).

It belongs to the glycosyltransferase group 1 family.

The catalysed reaction is [(1-&gt;3)-alpha-D-glucosyl](n) + UDP-alpha-D-glucose = [(1-&gt;3)-alpha-D-glucosyl](n+1) + UDP + H(+). The sequence is that of Cell wall alpha-1,3-glucan synthase mok12 (mok12) from Schizosaccharomyces pombe (strain 972 / ATCC 24843) (Fission yeast).